Consider the following 322-residue polypeptide: Putative T-box protein 11 (322 aa).

Positions 16-185 form a DNA-binding region, T-box; that stretch reads LWRSCHEYDN…NNPYSTGSRK (170 aa). Residues 171-182 show a composition bias toward polar residues; that stretch reads TLKTNNNPYSTG. Positions 171 to 214 are disordered; sequence TLKTNNNPYSTGSRKDRRRERQSPVYSEGTSSEKSISPPPAKKI.

The protein localises to the nucleus. This Caenorhabditis elegans protein is Putative T-box protein 11 (tbx-11).